Reading from the N-terminus, the 430-residue chain is Enolase (430 aa).

A (2R)-2-phosphoglycerate-binding site is contributed by Gln-168. Glu-210 serves as the catalytic Proton donor. Mg(2+)-binding residues include Asp-247, Glu-288, and Asp-315. Lys-340, Arg-369, Ser-370, and Lys-391 together coordinate (2R)-2-phosphoglycerate. The active-site Proton acceptor is the Lys-340.

Belongs to the enolase family. It depends on Mg(2+) as a cofactor.

The protein localises to the cytoplasm. Its subcellular location is the secreted. It localises to the cell surface. It carries out the reaction (2R)-2-phosphoglycerate = phosphoenolpyruvate + H2O. The protein operates within carbohydrate degradation; glycolysis; pyruvate from D-glyceraldehyde 3-phosphate: step 4/5. Its function is as follows. Catalyzes the reversible conversion of 2-phosphoglycerate (2-PG) into phosphoenolpyruvate (PEP). It is essential for the degradation of carbohydrates via glycolysis. The protein is Enolase of Rippkaea orientalis (strain PCC 8801 / RF-1) (Cyanothece sp. (strain PCC 8801)).